The chain runs to 259 residues: 3-deoxy-manno-octulosonate cytidylyltransferase (259 aa).

Belongs to the KdsB family.

The protein localises to the cytoplasm. It catalyses the reaction 3-deoxy-alpha-D-manno-oct-2-ulosonate + CTP = CMP-3-deoxy-beta-D-manno-octulosonate + diphosphate. It participates in nucleotide-sugar biosynthesis; CMP-3-deoxy-D-manno-octulosonate biosynthesis; CMP-3-deoxy-D-manno-octulosonate from 3-deoxy-D-manno-octulosonate and CTP: step 1/1. It functions in the pathway bacterial outer membrane biogenesis; lipopolysaccharide biosynthesis. Functionally, activates KDO (a required 8-carbon sugar) for incorporation into bacterial lipopolysaccharide in Gram-negative bacteria. The protein is 3-deoxy-manno-octulosonate cytidylyltransferase of Aeromonas salmonicida (strain A449).